The primary structure comprises 119 residues: Large ribosomal subunit protein bL20 (119 aa).

This sequence belongs to the bacterial ribosomal protein bL20 family.

In terms of biological role, binds directly to 23S ribosomal RNA and is necessary for the in vitro assembly process of the 50S ribosomal subunit. It is not involved in the protein synthesizing functions of that subunit. In Clostridium kluyveri (strain NBRC 12016), this protein is Large ribosomal subunit protein bL20.